A 522-amino-acid chain; its full sequence is Sulfite reductase [NADPH] flavoprotein alpha-component (522 aa).

The 139-residue stretch at 60-198 (ITILFGSQTG…DTERWSSDAL (139 aa)) folds into the Flavodoxin-like domain. Positions 217-242 (TLRSHQDLRSHQEQSRNRARPYDKDN) are disordered. Basic and acidic residues predominate over residues 220-242 (SHQDLRSHQEQSRNRARPYDKDN). An FAD-binding FR-type domain is found at 241–399 (DNPYTATLLE…VAPYRAFLQQ (159 aa)).

As to quaternary structure, alpha(8)-beta(8). The alpha component is a flavoprotein, the beta component is a hemoprotein. FAD serves as cofactor. It depends on FMN as a cofactor.

The catalysed reaction is hydrogen sulfide + 3 NADP(+) + 3 H2O = sulfite + 3 NADPH + 4 H(+). Its function is as follows. Catalyzes the 6-electron reduction of sulfite to sulfide. This is one of several activities required for the biosynthesis of L-cysteine from sulfate. The flavo-protein component catalyzes the electron flow from NADPH -&gt; FAD -&gt; FMN to the hemoprotein component. The protein is Sulfite reductase [NADPH] flavoprotein alpha-component (cysJ) of Thiocapsa roseopersicina.